A 1594-amino-acid polypeptide reads, in one-letter code: Transcription factor Gibbin (1594 aa).

Disordered regions lie at residues 19 to 111 (PDYL…RHWD), 149 to 241 (LRLS…LADA), 256 to 307 (QLLE…DPLG), and 367 to 464 (CSPH…RKGK). Residues 30-47 (GGPPTPRPLLPTRPPASP) are compositionally biased toward pro residues. K79 bears the N6-acetyllysine mark. Residues 165–177 (SFFSSPSLANSIR) show a composition bias toward polar residues. The segment covering 178–193 (SPEERANPHTKSERPS) has biased composition (basic and acidic residues). A compositionally biased stretch (acidic residues) spans 228-240 (PEPDGPDYSELAD). Position 267 is a phosphoserine (S267). Residues 272–303 (PQLLDPQPRFLDPQALEPLGEGLELPPLQPLA) are compositionally biased toward low complexity. Basic residues predominate over residues 391-401 (ILCRRRKAGRG). The segment at residues 395–407 (RRKAGRGRKADSG) is a DNA-binding region (a.T hook 1). The span at 427–447 (EPPPLPPPPPPTLSGPGPVPE) shows a compositional bias: pro residues. A DNA-binding region (a.T hook 2) is located at residues 541-553 (KRKRGRPPKNLLL). The tract at residues 578–604 (MPEVKKRRRRKQKLASPQPSYAADAND) is disordered. S593 carries the post-translational modification Phosphoserine. A Glycyl lysine isopeptide (Lys-Gly) (interchain with G-Cter in SUMO2) cross-link involves residue K606. Residues 714 to 789 (LTELGHPRKR…PGGQAGRNCG (76 aa)) form a disordered region. The span at 734 to 743 (KPKRKRRSRK) shows a compositional bias: basic residues. Residues S825 and S842 each carry the phosphoserine modification. R887 bears the Omega-N-methylarginine mark. Position 892 is a phosphoserine (S892). Positions 942-967 (KLAPPPSAVARSPTTHPPANTYPPQY) are disordered. S1060 carries the post-translational modification Phosphoserine. Disordered regions lie at residues 1152–1191 (VSETFSESSSDSTQFSQPVGGGGFRRANSEASSSEGQSSL) and 1245–1306 (STSA…PDLG). 3 stretches are compositionally biased toward low complexity: residues 1153-1168 (SETFSESSSDSTQFSQ), 1180-1191 (SEASSSEGQSSL), and 1245-1264 (STSATASGYPSKRSTGPRQP). S1180 is modified (phosphoserine). Phosphoserine occurs at positions 1315, 1317, and 1392. The residue at position 1394 (T1394) is a Phosphothreonine. At S1396 the chain carries Phosphoserine. K1402 participates in a covalent cross-link: Glycyl lysine isopeptide (Lys-Gly) (interchain with G-Cter in SUMO2). The tract at residues 1495–1525 (HLASPPATPKADKEPLEMARPPGPPRGPAAA) is disordered. Residues S1498 and S1540 each carry the phosphoserine modification.

Its subcellular location is the nucleus. The protein resides in the chromosome. Transcription factor required for the proper patterning of the epidermis, which plays a key role in early epithelial morphogenesis. Directly binds promoter and enhancer regions and acts by maintaining local enhancer-promoter chromatin architecture. Interacts with many sequence-specific zinc-finger transcription factors and methyl-CpG-binding proteins to regulate the expression of mesoderm genes that wire surface ectoderm stratification. This Mus musculus (Mouse) protein is Transcription factor Gibbin.